The sequence spans 734 residues: Photosystem I P700 chlorophyll a apoprotein A2 (734 aa).

A run of 8 helical transmembrane segments spans residues 46 to 69 (IFAS…FHVA), 135 to 158 (LYIG…LHLQ), 175 to 199 (LNHH…HVAI), 273 to 291 (MAHH…GHMY), 330 to 353 (LHFQ…QHMY), 369 to 395 (AALY…IFFI), 417 to 439 (AIIS…LYVH), and 517 to 535 (FLVH…LILV). 2 residues coordinate [4Fe-4S] cluster: cysteine 559 and cysteine 568. 2 helical membrane-spanning segments follow: residues 575–596 (AFYL…YWHW) and 643–665 (LSVW…MFLI). The chlorophyll a site is built by histidine 654, methionine 662, and tyrosine 670. Tryptophan 671 contributes to the phylloquinone binding site. A helical transmembrane segment spans residues 707-727 (LVGLAHFSVGYIFTYAAFLIA).

This sequence belongs to the PsaA/PsaB family. In terms of assembly, the PsaA/B heterodimer binds the P700 chlorophyll special pair and subsequent electron acceptors. PSI consists of a core antenna complex that captures photons, and an electron transfer chain that converts photonic excitation into a charge separation. The eukaryotic PSI reaction center is composed of at least 11 subunits. P700 is a chlorophyll a/chlorophyll a' dimer, A0 is one or more chlorophyll a, A1 is one or both phylloquinones and FX is a shared 4Fe-4S iron-sulfur center. serves as cofactor.

Its subcellular location is the plastid. It is found in the chloroplast thylakoid membrane. The enzyme catalyses reduced [plastocyanin] + hnu + oxidized [2Fe-2S]-[ferredoxin] = oxidized [plastocyanin] + reduced [2Fe-2S]-[ferredoxin]. Functionally, psaA and PsaB bind P700, the primary electron donor of photosystem I (PSI), as well as the electron acceptors A0, A1 and FX. PSI is a plastocyanin-ferredoxin oxidoreductase, converting photonic excitation into a charge separation, which transfers an electron from the donor P700 chlorophyll pair to the spectroscopically characterized acceptors A0, A1, FX, FA and FB in turn. Oxidized P700 is reduced on the lumenal side of the thylakoid membrane by plastocyanin. In Populus alba (White poplar), this protein is Photosystem I P700 chlorophyll a apoprotein A2.